Reading from the N-terminus, the 778-residue chain is MKENNKTIEAKNKELRDATKEFNEKLQKFLKDKVKKGFQIKNPNYKIDDNKISSNEVFKNNKNDFELNLPKNTWEEKTNKPESFENYKNVIPPYEDKFLPENFKEKFAPKNIKSEPLINKKDNLKEKNNNPVFDEVKIQEDDKFFDFSKFSETVSNQPENILKIEENDFKEIHDDFVSQYETFSKLETKENTNDLKTNLSSDTIKTIESKNEPEVQIESEIKDDSLEKEISEDDSFMDIFKAEQPDNQEDDSFVIDEEKAKEEYQEIKTNKSIVSDSHKIDIYEENEDLMKLNTLKSDKGIIYQIFGPVVDVKFARNQMPNINDCLEVKLPNNKKLVLEVALLEGDDVARCISMGSTEGLYRGLEVINTKNPIMAPVGSAVLGRMFNVVGEPIDNKPMPEKVEYSPIHKKPPSFDEQSTKTEIFETGIKVIDLLVPYVKGGKIGLFGGAGVGKTVLVQELIHNIATGHGGLSIFAGVGERTREGNDLYHEMIDGGVINQTALVFGQMNEPPGARMRVALTALTMAEHFRENNKQDVLLFIDNIFRFSQAGSEVSALLGRIPSAVGYQPTLAFEMGQLQERITSTKSGSITSVQAVYVPADDLTDPAPSTTFAHLDAKTVLDRKIASLGIYPAINPLESSSRMLDPSIVGIEHYKVARSVQTILQKFEELQDIIAILGIDELSEEDKLTVSRARKIRNFLSQPFFVAEKFSHKSGKYVSTQDTISGFSEIIEGKCDDIPEQYFLYVGGIDDVHKNYVAANSNNKVNSSNKPLNSENKSN.

Residues 1-289 form a unknown region; that stretch reads MKENNKTIEA…IDIYEENEDL (289 aa). An ATP synthase subunit beta region spans residues 290–778; it reads MKLNTLKSDK…KPLNSENKSN (489 aa). ATP is bound at residue 447–454; it reads GGAGVGKT.

This sequence belongs to the ATPase alpha/beta chains family. As to quaternary structure, F-type ATPases have 2 components, CF(1) - the catalytic core - and CF(0) - the membrane proton channel. CF(1) has five subunits: alpha(3), beta(3), gamma(1), delta(1), epsilon(1). CF(0) has three main subunits: a(1), b(2) and c(9-12). The alpha and beta chains form an alternating ring which encloses part of the gamma chain. CF(1) is attached to CF(0) by a central stalk formed by the gamma and epsilon chains, while a peripheral stalk is formed by the delta and b chains.

The protein resides in the cell membrane. It catalyses the reaction ATP + H2O + 4 H(+)(in) = ADP + phosphate + 5 H(+)(out). Produces ATP from ADP in the presence of a proton gradient across the membrane. The catalytic sites are hosted primarily by the beta subunits. In Malacoplasma penetrans (strain HF-2) (Mycoplasma penetrans), this protein is ATP synthase subunit beta (atpD).